Consider the following 172-residue polypeptide: Myosin regulatory light chain (172 aa).

At Thr17 the chain carries Phosphothreonine. Ser18 is modified (phosphoserine). EF-hand domains lie at 27–62 (AQIQ…LGKE), 98–133 (DPEE…MGER), and 134–168 (YSEE…GTKD). The Ca(2+) site is built by Asp40, Asn42, Asp44, and Asp51.

As to quaternary structure, myosin is a hexamer of 2 heavy chains and 4 light chains (two regulatory light chains and two essential light chains). Post-translationally, may be phosphorylated by let-502 or/and pak-1 and dephosphorylated by mel-11 to regulate its activation and myosin II-mediated contraction. In terms of tissue distribution, expressed in the spermathecal and uterine walls. Weak expression in gonadal sheath and intestinal muscle. Not detected in vulval, pharyngeal or body wall muscles.

The protein localises to the cytoplasm. The protein resides in the cytoskeleton. Regulates myosin II activity and organization during embryo elongation. May be involved in the organization of mlc-5 into bundles. Required maternally for cytokinesis during meiosis and mitosis in the early embryo and for the establishment of embryonic anterior-posterior polarity. In Caenorhabditis elegans, this protein is Myosin regulatory light chain.